The primary structure comprises 465 residues: Nuclear pore complex protein NUP50B (465 aa).

Disordered regions lie at residues 1-44 (MGDS…TFNT) and 59-244 (RRTD…FHQH). G2 is modified (N-acetylglycine). The segment covering 26-35 (GLDDDDEDTS) has biased composition (acidic residues). Residues 81 to 97 (PFTAPAPSTAAAETTKP) are compositionally biased toward low complexity. 3 stretches are compositionally biased toward basic and acidic residues: residues 105–127 (TLADGRSDATKETDGDSKEKSDA), 141–157 (ISAKTKDIIDGGEKEMS), and 216–233 (TEKEGKEGDGNEDTEKNG). S125 is subject to Phosphoserine. Repeat copies occupy residues 266–267 (FG), 286–287 (FG), and 297–298 (FG). A 3 X 2 AA repeats of F-G region spans residues 266–298 (FGLVPQEGSTGSGSEQSSFSFGQANNGNSSLFG). 2 disordered regions span residues 308 to 330 (KSTETTTAFPSKQDVSVETGEEN) and 439 to 465 (HKDSKPSVAEAAAPLKTPENSPSAEDA). The residue at position 455 (T455) is a Phosphothreonine. Residues 456–465 (PENSPSAEDA) show a composition bias toward polar residues. Residue S459 is modified to Phosphoserine.

As to quaternary structure, part of the nuclear pore complex (NPC). The NPC has an eight-fold symmetrical structure comprising a central transport channel and two rings, the cytoplasmic and nuclear rings, to which eight filaments are attached. The cytoplasmic filaments have loose ends, while the nuclear filaments are joined in a distal ring, forming a nuclear basket. NPCs are highly dynamic in configuration and composition, and can be devided in 3 subcomplexes, the NUP62 subcomplex, the NUP107-160 subcomplex and the NUP93 subcomplex, containing approximately 30 different nucleoporin proteins.

The protein resides in the nucleus. The protein localises to the nucleoplasm. It localises to the nuclear pore complex. Its function is as follows. Probably involved in nucleocytoplasmic transport via its interactions with importins and Ran, rather than by forming part of the nuclear pore complex (NPC) scaffolding. The sequence is that of Nuclear pore complex protein NUP50B from Arabidopsis thaliana (Mouse-ear cress).